The following is a 65-amino-acid chain: Large ribosomal subunit protein bL35 (65 aa).

This sequence belongs to the bacterial ribosomal protein bL35 family.

The protein is Large ribosomal subunit protein bL35 of Paraburkholderia phytofirmans (strain DSM 17436 / LMG 22146 / PsJN) (Burkholderia phytofirmans).